A 209-amino-acid polypeptide reads, in one-letter code: Glycine cleavage system H-like protein gcvH4 (209 aa).

Positions 35-51 are enriched in low complexity; sequence NNNNNNNNNNNNNNNNN. Positions 35 to 56 are disordered; the sequence is NNNNNNNNNNNNNNNNNRNKKL. The 87-residue stretch at 73–159 folds into the Lipoyl-binding domain; it reads FATIGITNYV…KTTTTTTKIK (87 aa).

The protein belongs to the GcvH family.

In Dictyostelium discoideum (Social amoeba), this protein is Glycine cleavage system H-like protein gcvH4 (gcvH4).